Here is a 320-residue protein sequence, read N- to C-terminus: tRNA(Ile)-lysidine synthase, chloroplastic (320 aa).

31–36 (SGGKDS) contacts ATP.

This sequence belongs to the tRNA(Ile)-lysidine synthase family.

The protein localises to the plastid. The protein resides in the chloroplast. The catalysed reaction is cytidine(34) in tRNA(Ile2) + L-lysine + ATP = lysidine(34) in tRNA(Ile2) + AMP + diphosphate + H(+). Functionally, ligates lysine onto the cytidine present at position 34 of the AUA codon-specific tRNA(Ile) that contains the anticodon CAU, in an ATP-dependent manner. Cytidine is converted to lysidine, thus changing the amino acid specificity of the tRNA from methionine to isoleucine. This is tRNA(Ile)-lysidine synthase, chloroplastic from Gracilaria tenuistipitata var. liui (Red alga).